Consider the following 411-residue polypeptide: tRNA (guanine(37)-N(1))-methyltransferase (411 aa).

Residues His-216, 254–255 (DL), 282–283 (DG), and Asn-303 contribute to the S-adenosyl-L-methionine site. Positions 391-411 (ERQASKQDDPKRRKVAAENAA) are disordered.

It belongs to the class I-like SAM-binding methyltransferase superfamily. TRM5/TYW2 family. In terms of assembly, monomer.

The protein resides in the mitochondrion matrix. The protein localises to the nucleus. It is found in the cytoplasm. The catalysed reaction is guanosine(37) in tRNA + S-adenosyl-L-methionine = N(1)-methylguanosine(37) in tRNA + S-adenosyl-L-homocysteine + H(+). Functionally, specifically methylates the N1 position of guanosine-37 in various cytoplasmic and mitochondrial tRNAs. Methylation is not dependent on the nature of the nucleoside 5' of the target nucleoside. This is the first step in the biosynthesis of wybutosine (yW), a modified base adjacent to the anticodon of tRNAs and required for accurate decoding. The sequence is that of tRNA (guanine(37)-N(1))-methyltransferase from Phytophthora infestans (strain T30-4) (Potato late blight agent).